An 864-amino-acid chain; its full sequence is Leucine--tRNA ligase (864 aa).

The short motif at 42 to 52 (PYPSGKLHMGH) is the 'HIGH' region element. The 'KMSKS' region motif lies at 624-628 (KMSKS). Lys-627 lines the ATP pocket.

The protein belongs to the class-I aminoacyl-tRNA synthetase family.

Its subcellular location is the cytoplasm. The enzyme catalyses tRNA(Leu) + L-leucine + ATP = L-leucyl-tRNA(Leu) + AMP + diphosphate. This Burkholderia pseudomallei (strain 1710b) protein is Leucine--tRNA ligase.